The chain runs to 274 residues: Large ribosomal subunit protein uL2 (274 aa).

Positions V223–K274 are disordered.

This sequence belongs to the universal ribosomal protein uL2 family. In terms of assembly, part of the 50S ribosomal subunit. Forms a bridge to the 30S subunit in the 70S ribosome.

One of the primary rRNA binding proteins. Required for association of the 30S and 50S subunits to form the 70S ribosome, for tRNA binding and peptide bond formation. It has been suggested to have peptidyltransferase activity; this is somewhat controversial. Makes several contacts with the 16S rRNA in the 70S ribosome. In Shewanella putrefaciens (strain CN-32 / ATCC BAA-453), this protein is Large ribosomal subunit protein uL2.